Consider the following 101-residue polypeptide: Urease subunit beta (101 aa).

Belongs to the urease beta subunit family. In terms of assembly, heterotrimer of UreA (gamma), UreB (beta) and UreC (alpha) subunits. Three heterotrimers associate to form the active enzyme.

The protein resides in the cytoplasm. The catalysed reaction is urea + 2 H2O + H(+) = hydrogencarbonate + 2 NH4(+). It functions in the pathway nitrogen metabolism; urea degradation; CO(2) and NH(3) from urea (urease route): step 1/1. In Burkholderia orbicola (strain AU 1054), this protein is Urease subunit beta.